A 125-amino-acid polypeptide reads, in one-letter code: Ixonnexin (125 aa).

An N-terminal signal peptide occupies residues 1-21 (MGLTGTTLVLVCVAFFGSAAA). N-linked (GlcNAc...) asparagine glycosylation occurs at Asn26. Residues 81–125 (TSSGGPDDTGDNTPPPTEKPKQKKKKPKKTKKPKRKSKKDQKENF) are disordered. Basic residues predominate over residues 101 to 119 (KQKKKKPKKTKKPKRKSKK).

Belongs to the salp14 family. As to quaternary structure, homodimer. Interacts with host PLG. Interacts with host PLAT. As to expression, saliva (at protein level).

It is found in the secreted. In terms of biological role, salivary protein that promotes host fibrinolysis via accelerating host plasmin generation from plasminogen (PLG) initiated by tPA/tissue-type plasminogen activator (PLAT). Does not affect urokinase (PLAU)-mediated fibrinolysis in the host. Enhances amidolytic activity of host coagulation factor Xa (F10). The sequence is that of Ixonnexin from Ixodes scapularis (Black-legged tick).